The sequence spans 469 residues: Tetratricopeptide repeat protein 38 (469 aa).

TPR repeat units follow at residues arginine 107–aspartate 140, serine 179–aspartate 212, and cysteine 251–alanine 284.

This sequence belongs to the TTC38 family.

The chain is Tetratricopeptide repeat protein 38 (ttc38) from Xenopus tropicalis (Western clawed frog).